A 63-amino-acid chain; its full sequence is Large ribosomal subunit protein uL29 (63 aa).

Belongs to the universal ribosomal protein uL29 family.

This is Large ribosomal subunit protein uL29 from Alcanivorax borkumensis (strain ATCC 700651 / DSM 11573 / NCIMB 13689 / SK2).